A 1741-amino-acid chain; its full sequence is DNA-directed RNA polymerase III subunit RPC1 (1741 aa).

7 residues coordinate Zn(2+): cysteine 79, cysteine 82, cysteine 89, histidine 92, cysteine 119, cysteine 122, and cysteine 160. Positions 722, 724, and 726 each coordinate Mg(2+). Residues 1099 to 1111 (PFEFLAHARAGRD) are bridging helix. The tract at residues 1719–1741 (RHANKRSWSRGKERHASLKPKNR) is disordered.

This sequence belongs to the RNA polymerase beta' chain family. As to quaternary structure, component of the RNA polymerase III (Pol III) complex consisting of 17 subunits.

The protein localises to the nucleus. It carries out the reaction RNA(n) + a ribonucleoside 5'-triphosphate = RNA(n+1) + diphosphate. Functionally, DNA-dependent RNA polymerase catalyzes the transcription of DNA into RNA using the four ribonucleoside triphosphates as substrates. Largest and catalytic core component of RNA polymerase III which synthesizes small RNAs, such as 5S rRNA and tRNAs. Forms the polymerase active center together with the second largest subunit. A single-stranded DNA template strand of the promoter is positioned within the central active site cleft of Pol III. A bridging helix emanates from RPC1 and crosses the cleft near the catalytic site and is thought to promote translocation of Pol III by acting as a ratchet that moves the RNA-DNA hybrid through the active site by switching from straight to bent conformations at each step of nucleotide addition. The protein is DNA-directed RNA polymerase III subunit RPC1 (RPOA3) of Giardia intestinalis (Giardia lamblia).